The sequence spans 415 residues: Gamma-glutamyl phosphate reductase (415 aa).

Belongs to the gamma-glutamyl phosphate reductase family.

Its subcellular location is the cytoplasm. It catalyses the reaction L-glutamate 5-semialdehyde + phosphate + NADP(+) = L-glutamyl 5-phosphate + NADPH + H(+). Its pathway is amino-acid biosynthesis; L-proline biosynthesis; L-glutamate 5-semialdehyde from L-glutamate: step 2/2. In terms of biological role, catalyzes the NADPH-dependent reduction of L-glutamate 5-phosphate into L-glutamate 5-semialdehyde and phosphate. The product spontaneously undergoes cyclization to form 1-pyrroline-5-carboxylate. The chain is Gamma-glutamyl phosphate reductase from Bacillus cereus (strain ZK / E33L).